A 134-amino-acid polypeptide reads, in one-letter code: UPF0412 protein YaaI (134 aa).

A signal peptide spans 1-23; that stretch reads MKSVFTLSASLAISLMLCCTAQA.

It belongs to the UPF0412 family.

In Escherichia coli O17:K52:H18 (strain UMN026 / ExPEC), this protein is UPF0412 protein YaaI.